Here is a 206-residue protein sequence, read N- to C-terminus: Imidazoleglycerol-phosphate dehydratase (206 aa).

The disordered stretch occupies residues 1–21 (MTTPSTAPTPAPRKAEVSRNT).

Belongs to the imidazoleglycerol-phosphate dehydratase family.

Its subcellular location is the cytoplasm. The enzyme catalyses D-erythro-1-(imidazol-4-yl)glycerol 3-phosphate = 3-(imidazol-4-yl)-2-oxopropyl phosphate + H2O. Its pathway is amino-acid biosynthesis; L-histidine biosynthesis; L-histidine from 5-phospho-alpha-D-ribose 1-diphosphate: step 6/9. The protein is Imidazoleglycerol-phosphate dehydratase of Polaromonas sp. (strain JS666 / ATCC BAA-500).